We begin with the raw amino-acid sequence, 437 residues long: uncharacterized protein (437 aa).

The segment covering proline 63–proline 87 has biased composition (polar residues). Disordered stretches follow at residues proline 63–proline 97, valine 112–threonine 147, and proline 346–tryptophan 437. Residues glutamate 399–aspartate 409 show a composition bias toward polar residues. The span at lysine 425–tryptophan 437 shows a compositional bias: low complexity.

This is an uncharacterized protein from Caenorhabditis elegans.